Consider the following 397-residue polypeptide: Ornithine aminotransferase (397 aa).

Position 255 is an N6-(pyridoxal phosphate)lysine (Lys-255).

The protein belongs to the class-III pyridoxal-phosphate-dependent aminotransferase family. OAT subfamily. It depends on pyridoxal 5'-phosphate as a cofactor.

It is found in the cytoplasm. It carries out the reaction a 2-oxocarboxylate + L-ornithine = L-glutamate 5-semialdehyde + an L-alpha-amino acid. Its pathway is amino-acid biosynthesis; L-proline biosynthesis; L-glutamate 5-semialdehyde from L-ornithine: step 1/1. Functionally, catalyzes the interconversion of ornithine to glutamate semialdehyde. This Macrococcus caseolyticus (strain JCSC5402) (Macrococcoides caseolyticum) protein is Ornithine aminotransferase.